The chain runs to 485 residues: Argininosuccinate lyase (485 aa).

It belongs to the lyase 1 family. Argininosuccinate lyase subfamily.

It is found in the cytoplasm. The enzyme catalyses 2-(N(omega)-L-arginino)succinate = fumarate + L-arginine. It functions in the pathway amino-acid biosynthesis; L-arginine biosynthesis; L-arginine from L-ornithine and carbamoyl phosphate: step 3/3. The protein is Argininosuccinate lyase of Paracidovorax citrulli (strain AAC00-1) (Acidovorax citrulli).